A 202-amino-acid polypeptide reads, in one-letter code: FMN-dependent NADH:quinone oxidoreductase 2 (202 aa).

Residues S9, 15–17 (SAS), and 95–98 (MWNL) each bind FMN.

The protein belongs to the azoreductase type 1 family. In terms of assembly, homodimer. Requires FMN as cofactor.

It carries out the reaction 2 a quinone + NADH + H(+) = 2 a 1,4-benzosemiquinone + NAD(+). The enzyme catalyses N,N-dimethyl-1,4-phenylenediamine + anthranilate + 2 NAD(+) = 2-(4-dimethylaminophenyl)diazenylbenzoate + 2 NADH + 2 H(+). In terms of biological role, quinone reductase that provides resistance to thiol-specific stress caused by electrophilic quinones. Also exhibits azoreductase activity. Catalyzes the reductive cleavage of the azo bond in aromatic azo compounds to the corresponding amines. In Hahella chejuensis (strain KCTC 2396), this protein is FMN-dependent NADH:quinone oxidoreductase 2.